A 72-amino-acid polypeptide reads, in one-letter code: Translation initiation factor IF-1 (72 aa).

One can recognise an S1-like domain in the interval 1 to 72; it reads MSKDDVIQMQ…SRARIVFRAK (72 aa).

The protein belongs to the IF-1 family. As to quaternary structure, component of the 30S ribosomal translation pre-initiation complex which assembles on the 30S ribosome in the order IF-2 and IF-3, IF-1 and N-formylmethionyl-tRNA(fMet); mRNA recruitment can occur at any time during PIC assembly.

The protein resides in the cytoplasm. Functionally, one of the essential components for the initiation of protein synthesis. Stabilizes the binding of IF-2 and IF-3 on the 30S subunit to which N-formylmethionyl-tRNA(fMet) subsequently binds. Helps modulate mRNA selection, yielding the 30S pre-initiation complex (PIC). Upon addition of the 50S ribosomal subunit IF-1, IF-2 and IF-3 are released leaving the mature 70S translation initiation complex. The chain is Translation initiation factor IF-1 from Albidiferax ferrireducens (strain ATCC BAA-621 / DSM 15236 / T118) (Rhodoferax ferrireducens).